The primary structure comprises 3432 residues: Genome polyprotein (3432 aa).

The interval 2 to 15 (TKKPGGPGKNRAIN) is interaction with host EXOC1. Topologically, residues 2–109 (TKKPGGPGKN…RKQNKRGGNE (108 aa)) are cytoplasmic. The hydrophobic; homodimerization of capsid protein C stretch occupies residues 37–72 (LLDGRGPVRFVLALITFFKFTALAPTKALLGRWKAV). Positions 106-127 (GGNEGSIMWLASLAVVIAYAGA) are cleaved as a propeptide — ER anchor for the capsid protein C, removed in mature form by serine protease NS3. A helical membrane pass occupies residues 110-130 (GSIMWLASLAVVIAYAGAMKL). The Extracellular portion of the chain corresponds to 131–253 (SNFQGKLLMT…ATRYLMKTEN (123 aa)). N142 is a glycosylation site (N-linked (GlcNAc...) asparagine; by host). The helical transmembrane segment at 254–274 (WIIRNPGYAFLAATLGWMLGS) threads the bilayer. Topologically, residues 275 to 279 (NNGQR) are cytoplasmic. A helical membrane pass occupies residues 280–294 (VVFTILLLLVAPAYS). Residues 295–746 (FNCLGMGNRD…QVFGGAFRTL (452 aa)) lie on the Extracellular side of the membrane. 6 disulfides stabilise this stretch: C297/C324, C354/C410, C354/C415, C368/C399, C386/C410, and C386/C415. The segment at 392-405 (DRGWGNGCGLFGKG) is fusion peptide. N-linked (GlcNAc...) asparagine; by host glycosylation is present at N448. Disulfide bonds link C484-C581 and C598-C629. The chain crosses the membrane as a helical span at residues 747-767 (FGGMSWITQGLMGALLLWMGV). Over 768-773 (NARDRS) the chain is Cytoplasmic. A helical membrane pass occupies residues 774–794 (IALAFLATGGVLVFLATNVHA). Residues 795-1219 (DTGCAIDITR…AFAEANSGGD (425 aa)) are Extracellular-facing. Cystine bridges form between C798/C809, C849/C937, C973/C1017, C1074/C1123, C1085/C1106, and C1107/C1110. N-linked (GlcNAc...) asparagine; by host glycans are attached at residues N924 and N1001. The helical transmembrane segment at 1220–1240 (VLHLALIAVFKIQPAFLVMNM) threads the bilayer. The Cytoplasmic segment spans residues 1241 to 1250 (LSTRWTNQEN). The chain crosses the membrane as a helical span at residues 1251–1271 (VVLVLGAALFQLASVDLQIGV). H1272 is a topological domain (lumenal). The helical transmembrane segment at 1273–1293 (GILNAAAIAWMIVRAITFPTT) threads the bilayer. Topologically, residues 1294-1309 (SSVTMPVLALLTPGMR) are cytoplasmic. Residues 1310 to 1330 (ALYLDTYRIILLVIGICSLLQ) form a helical membrane-spanning segment. Residues 1331–1341 (ERKKTMAKKKG) are Lumenal-facing. Residues 1342 to 1362 (AVLLGLALTSTGWFSPTTIAA) form a helical membrane-spanning segment. At 1363–1374 (GLMVCNPNKKRG) the chain is on the cytoplasmic side. The helical transmembrane segment at 1375–1395 (WPATEFLSAVGLMFAIVGGLA) threads the bilayer. Residues 1396–1398 (ELD) lie on the Lumenal side of the membrane. A helical transmembrane segment spans residues 1399–1419 (IESMSIPFMLAGLMAVSYVVS). At 1420-1476 (GKATDMWLERAADISWEMDAAITGSSRRLDVKLDDDGDFHLIDDPGVPWKVWVLRMS) the chain is on the cytoplasmic side. An interacts with and activates NS3 protease region spans residues 1427 to 1466 (LERAADISWEMDAAITGSSRRLDVKLDDDGDFHLIDDPGV). The helical intramembrane region spans 1477-1497 (CIGLAALTPWAIVPAAFGYWL). The Cytoplasmic segment spans residues 1498–2173 (TLKTTKRGGV…RMALEELPDA (676 aa)). The Peptidase S7 domain occupies 1505-1682 (GGVFWDTPSP…DRQEEPVPEA (178 aa)). Catalysis depends on charge relay system; for serine protease NS3 activity residues H1555, D1579, and S1639. The region spanning 1685 to 1841 (PNMLRKRQMT…DSNAPIHDLQ (157 aa)) is the Helicase ATP-binding domain. Positions 1689-1692 (RKRQ) are important for RNA-binding. 1698-1705 (LHPGSGKT) is an ATP binding site. Positions 1789–1792 (DEAH) match the DEAH box motif. The region spanning 1852–2017 (GYEWITEYAG…GLVAQLYGPE (166 aa)) is the Helicase C-terminal domain. Residue K1893 is modified to N6-acetyllysine; by host. Residues 1950-1971 (NPSPITSASAAQRRGRVGRNPN) are disordered. Residues 2168–2172 (EELPD) are regulates the ATPase activity of NS3 helicase. The helical transmembrane segment at 2174–2194 (LETITLIVAITVMTGGFFLLM) threads the bilayer. Residues 2195-2199 (MQRKG) are Lumenal-facing. An intramembrane region (helical) is located at residues 2200-2220 (IGKMGLGALVLTLATFFLWAA). A topological domain (lumenal) is located at residue E2221. Residues 2222–2242 (VPGTKIAGTLLIALLLMVVLI) form a helical membrane-spanning segment. Topologically, residues 2243–2257 (PEPEKQRSQTDNQLA) are cytoplasmic. A helical transmembrane segment spans residues 2258 to 2278 (VFLICVLTVVGVVAANEYGML). Over 2279–2311 (EKTKADLKSMFVGKTQASGLTGLPSMALDLRPA) the chain is Lumenal. Residues 2312–2332 (TAWALYGGSTVVLTPLLKHLI) constitute an intramembrane region (helical). Over 2333-2368 (TSEYVTTSLASINSQAGSLFVLPRGVPFTDLDLTVG) the chain is Lumenal. The helical transmembrane segment at 2369–2389 (LVFLGCWGQITLTTFLTAMVL) threads the bilayer. At 2390 to 2444 (ATLHYGYMLPGWQAEALRAAQRRTAAGIMKNAVVDGMVATDVPELERTTPLMQKK) the chain is on the cytoplasmic side. A helical transmembrane segment spans residues 2445–2465 (VGQVLLIGVSVAAFLVNPNVT). Residues 2466–2469 (TVRE) lie on the Lumenal side of the membrane. A helical transmembrane segment spans residues 2470–2490 (AGVLVTAATLTLWDNGASAVW). At 2491 to 3432 (NSTTATGLCH…DVLIQEDRVI (942 aa)) the chain is on the cytoplasmic side. Residues 2528-2793 (GRPGGRTLGE…DVNLGSGTRA (266 aa)) form the mRNA cap 0-1 NS5-type MT domain. Residue S2583 coordinates S-adenosyl-L-methionine. S2583 is subject to Phosphoserine. K2588 serves as the catalytic For 2'-O-MTase activity. Residues G2613, W2614, T2631, K2632, D2658, and V2659 each coordinate S-adenosyl-L-methionine. D2673 functions as the For 2'-O-MTase activity in the catalytic mechanism. I2674 is a binding site for S-adenosyl-L-methionine. Active-site for 2'-O-MTase activity residues include K2709 and E2745. Y2747 is an S-adenosyl-L-methionine binding site. Residues E2967, H2971, C2976, and C2979 each coordinate Zn(2+). In terms of domain architecture, RdRp catalytic spans 3057 to 3209 (GKMYADDTAG…KPLDDRFATA (153 aa)). Positions 3244, 3260, and 3379 each coordinate Zn(2+).

It in the N-terminal section; belongs to the class I-like SAM-binding methyltransferase superfamily. mRNA cap 0-1 NS5-type methyltransferase family. In terms of assembly, homodimer. Interacts (via N-terminus) with host EXOC1 (via C-terminus); this interaction results in EXOC1 degradation through the proteasome degradation pathway. As to quaternary structure, forms heterodimers with envelope protein E in the endoplasmic reticulum and Golgi. Homodimer; in the endoplasmic reticulum and Golgi. Interacts with protein prM. Interacts with non-structural protein 1. Interacts with host HSPA5. In terms of assembly, homodimer; Homohexamer when secreted. Interacts with envelope protein E. NS1 interacts with NS4B. Interacts with host complement protein CFH; this interaction leads to the degradation of C3. As to quaternary structure, interacts (via N-terminus) with serine protease NS3. Forms a heterodimer with serine protease NS3. May form homooligomers. In terms of assembly, forms a heterodimer with NS2B. Interacts with non-structural protein 2A (via N-terminus). Interacts with NS4B. Interacts with unphosphorylated RNA-directed RNA polymerase NS5; this interaction stimulates RNA-directed RNA polymerase NS5 guanylyltransferase activity. Interacts with host ILF2. As to quaternary structure, interacts with serine protease NS3. Homodimer. Interacts with host STAT2; this interaction inhibits the phosphorylation of the latter, and, when all viral proteins are present (polyprotein), targets STAT2 for degradation. Interacts with serine protease NS3. The cofactor is Mn(2+). It depends on Mg(2+) as a cofactor. Specific enzymatic cleavages in vivo yield mature proteins. Cleavages in the lumen of endoplasmic reticulum are performed by host signal peptidase, whereas cleavages in the cytoplasmic side are performed by serine protease NS3. Signal cleavage at the 2K-4B site requires a prior NS3 protease-mediated cleavage at the 4A-2K site. In terms of processing, cleaved in post-Golgi vesicles by a host furin, releasing the mature small envelope protein M, and peptide pr. This cleavage is incomplete as up to 30% of viral particles still carry uncleaved prM. Post-translationally, N-glycosylated. N-glycosylated. The excreted form is glycosylated and this is required for efficient secretion of the protein from infected cells. In terms of processing, acetylated by host KAT5. Acetylation modulates NS3 RNA-binding and unwinding activities and plays an important positive role for viral replication. Post-translationally, phosphorylated on serines residues. This phosphorylation may trigger NS5 nuclear localization.

Its subcellular location is the virion. The protein resides in the host nucleus. It localises to the host cytoplasm. It is found in the host perinuclear region. The protein localises to the secreted. Its subcellular location is the virion membrane. The protein resides in the host endoplasmic reticulum membrane. It localises to the host cell surface. It catalyses the reaction Selective hydrolysis of -Xaa-Xaa-|-Yaa- bonds in which each of the Xaa can be either Arg or Lys and Yaa can be either Ser or Ala.. The enzyme catalyses RNA(n) + a ribonucleoside 5'-triphosphate = RNA(n+1) + diphosphate. The catalysed reaction is a ribonucleoside 5'-triphosphate + H2O = a ribonucleoside 5'-diphosphate + phosphate + H(+). It carries out the reaction ATP + H2O = ADP + phosphate + H(+). It catalyses the reaction a 5'-end (5'-triphosphoguanosine)-ribonucleoside in mRNA + S-adenosyl-L-methionine = a 5'-end (N(7)-methyl 5'-triphosphoguanosine)-ribonucleoside in mRNA + S-adenosyl-L-homocysteine. The enzyme catalyses a 5'-end (N(7)-methyl 5'-triphosphoguanosine)-ribonucleoside in mRNA + S-adenosyl-L-methionine = a 5'-end (N(7)-methyl 5'-triphosphoguanosine)-(2'-O-methyl-ribonucleoside) in mRNA + S-adenosyl-L-homocysteine + H(+). In terms of biological role, plays a role in virus budding by binding to the cell membrane and gathering the viral RNA into a nucleocapsid that forms the core of a mature virus particle. During virus entry, may induce genome penetration into the host cytoplasm after hemifusion induced by the surface proteins. Can migrate to the cell nucleus where it modulates host functions. Overcomes the anti-viral effects of host EXOC1 by sequestering and degrading the latter through the proteasome degradation pathway. Inhibits RNA silencing by interfering with host Dicer. Functionally, prevents premature fusion activity of envelope proteins in trans-Golgi by binding to envelope protein E at pH 6.0. After virion release in extracellular space, gets dissociated from E dimers. Its function is as follows. Acts as a chaperone for envelope protein E during intracellular virion assembly by masking and inactivating envelope protein E fusion peptide. prM is the only viral peptide matured by host furin in the trans-Golgi network probably to avoid catastrophic activation of the viral fusion activity in acidic Golgi compartment prior to virion release. prM-E cleavage is inefficient, and many virions are only partially matured. These uncleaved prM would play a role in immune evasion. In terms of biological role, may play a role in virus budding. Exerts cytotoxic effects by activating a mitochondrial apoptotic pathway through M ectodomain. May display a viroporin activity. Binds to host cell surface receptor and mediates fusion between viral and cellular membranes. Efficient virus attachment to cell is, at least in part, mediated by host HSPA5. Envelope protein is synthesized in the endoplasmic reticulum in the form of heterodimer with protein prM. They play a role in virion budding in the ER, and the newly formed immature particle is covered with 60 spikes composed of heterodimer between precursor prM and envelope protein E. The virion is transported to the Golgi apparatus where the low pH causes dissociation of PrM-E heterodimers and formation of E homodimers. prM-E cleavage is inefficient, and many virions are only partially matured. These uncleaved prM would play a role in immune evasion. Functionally, involved in immune evasion, pathogenesis and viral replication. Once cleaved off the polyprotein, is targeted to three destinations: the viral replication cycle, the plasma membrane and the extracellular compartment. Essential for viral replication. Required for formation of the replication complex and recruitment of other non-structural proteins to the ER-derived membrane structures. Excreted as a hexameric lipoparticle that plays a role against host immune response. Antagonizing the complement function. Binds to the host macrophages and dendritic cells. Inhibits signal transduction originating from Toll-like receptor 3 (TLR3). Its function is as follows. Component of the viral RNA replication complex that functions in virion assembly and antagonizes the host alpha/beta interferon antiviral response. In terms of biological role, required cofactor for the serine protease function of NS3. May have membrane-destabilizing activity and form viroporins. Displays three enzymatic activities: serine protease, NTPase and RNA helicase. NS3 serine protease, in association with NS2B, performs its autocleavage and cleaves the polyprotein at dibasic sites in the cytoplasm: C-prM, NS2A-NS2B, NS2B-NS3, NS3-NS4A, NS4A-2K and NS4B-NS5. NS3 RNA helicase binds RNA and unwinds dsRNA in the 3' to 5' direction. Functionally, regulates the ATPase activity of the NS3 helicase activity. NS4A allows NS3 helicase to conserve energy during unwinding. Its function is as follows. Functions as a signal peptide for NS4B and is required for the interferon antagonism activity of the latter. In terms of biological role, induces the formation of ER-derived membrane vesicles where the viral replication takes place. Inhibits interferon (IFN)-induced host STAT1 phosphorylation and nuclear translocation, thereby preventing the establishment of cellular antiviral state by blocking the IFN-alpha/beta pathway. Inhibits STAT2 translocation in the nucleus after IFN-alpha treatment. Replicates the viral (+) and (-) RNA genome, and performs the capping of genomes in the cytoplasm. NS5 methylates viral RNA cap at guanine N-7 and ribose 2'-O positions. Besides its role in RNA genome replication, also prevents the establishment of cellular antiviral state by blocking the interferon-alpha/beta (IFN-alpha/beta) signaling pathway. Inhibits host TYK2 and STAT2 phosphorylation, thereby preventing activation of JAK-STAT signaling pathway. This Ardeidae (herons) protein is Genome polyprotein.